A 212-amino-acid chain; its full sequence is Pyridoxine/pyridoxamine 5'-phosphate oxidase 1 (212 aa).

Residues 8–11 and Lys-66 contribute to the substrate site; that span reads RTDY. FMN-binding positions include 61-66, 76-77, Lys-83, and Gln-105; these read RIVLLK and FT. Residues Tyr-123, Arg-127, and Ser-131 each contribute to the substrate site. FMN is bound by residues 140–141 and Trp-184; that span reads QS. 190–192 is a binding site for substrate; the sequence is RLH. Arg-194 is an FMN binding site.

This sequence belongs to the pyridoxamine 5'-phosphate oxidase family. In terms of assembly, homodimer. FMN is required as a cofactor.

It catalyses the reaction pyridoxamine 5'-phosphate + O2 + H2O = pyridoxal 5'-phosphate + H2O2 + NH4(+). The enzyme catalyses pyridoxine 5'-phosphate + O2 = pyridoxal 5'-phosphate + H2O2. It functions in the pathway cofactor metabolism; pyridoxal 5'-phosphate salvage; pyridoxal 5'-phosphate from pyridoxamine 5'-phosphate: step 1/1. It participates in cofactor metabolism; pyridoxal 5'-phosphate salvage; pyridoxal 5'-phosphate from pyridoxine 5'-phosphate: step 1/1. In terms of biological role, catalyzes the oxidation of either pyridoxine 5'-phosphate (PNP) or pyridoxamine 5'-phosphate (PMP) into pyridoxal 5'-phosphate (PLP). This is Pyridoxine/pyridoxamine 5'-phosphate oxidase 1 from Ralstonia nicotianae (strain ATCC BAA-1114 / GMI1000) (Ralstonia solanacearum).